A 375-amino-acid polypeptide reads, in one-letter code: Platelet-derived growth factor receptor-like protein (375 aa).

Residues 1–21 form the signal peptide; the sequence is MKVWLLLGLLLVHEALEDVTG. Residues 22–64 are disordered; that stretch reads QHLPKNKRPKEPGENRIKPTNKKVKPKIPKIKDRDSADSTPKT. Residues 40-50 are compositionally biased toward basic residues; sequence PTNKKVKPKIP. The Ig-like C2-type 1 domain maps to 62-159; sequence PKTQSIMMQV…GYICRKDETK (98 aa). Cysteines 96 and 143 form a disulfide. N-linked (GlcNAc...) asparagine glycosylation is found at Asn-132 and Asn-219. The Ig-like C2-type 2 domain maps to 272–375; it reads PSTTILASSN…TTVATTVEFS (104 aa). A disulfide bridge links Cys-293 with Cys-357.

As to quaternary structure, forms a complex composed of PDGFRL, TNK2 and GRB2.

The protein localises to the secreted. This chain is Platelet-derived growth factor receptor-like protein (PDGFRL), found in Macaca fascicularis (Crab-eating macaque).